A 251-amino-acid polypeptide reads, in one-letter code: Lactose phosphotransferase system repressor (251 aa).

Residues 3-58 (KHERLDEIAKLVNKKGTIRTNEIVEGLNVSDMTVRRDLIELENKGILTKIHGGARS) enclose the HTH deoR-type domain. A DNA-binding region (H-T-H motif) is located at residues 20 to 39 (IRTNEIVEGLNVSDMTVRRD).

Repressor of the lactose catabolism operon. Galactose-6-phosphate is the inducer. In Staphylococcus aureus (strain NCTC 8325 / PS 47), this protein is Lactose phosphotransferase system repressor (lacR).